The following is an 827-amino-acid chain: Lon protease (827 aa).

The interval 1-27 is disordered; it reads MNDETLREQTTAESEETSPTTPSPEPE. The Lon N-terminal domain maps to 32 to 225; it reads LPLIPLEGAV…KVLMFYRKQF (194 aa). 385–392 lines the ATP pocket; sequence GPPGVGKT. Positions 625-806 constitute a Lon proteolytic domain; the sequence is IDQPGVAIGL…DEVLSIALLP (182 aa). Catalysis depends on residues serine 712 and lysine 755.

Belongs to the peptidase S16 family. As to quaternary structure, homohexamer. Organized in a ring with a central cavity.

It localises to the cytoplasm. The catalysed reaction is Hydrolysis of proteins in presence of ATP.. ATP-dependent serine protease that mediates the selective degradation of mutant and abnormal proteins as well as certain short-lived regulatory proteins. Required for cellular homeostasis and for survival from DNA damage and developmental changes induced by stress. Degrades polypeptides processively to yield small peptide fragments that are 5 to 10 amino acids long. Binds to DNA in a double-stranded, site-specific manner. The chain is Lon protease from Chloroflexus aurantiacus (strain ATCC 29366 / DSM 635 / J-10-fl).